Consider the following 219-residue polypeptide: N-(5'-phosphoribosyl)anthranilate isomerase (219 aa).

It belongs to the TrpF family.

It catalyses the reaction N-(5-phospho-beta-D-ribosyl)anthranilate = 1-(2-carboxyphenylamino)-1-deoxy-D-ribulose 5-phosphate. The protein operates within amino-acid biosynthesis; L-tryptophan biosynthesis; L-tryptophan from chorismate: step 3/5. This is N-(5'-phosphoribosyl)anthranilate isomerase from Bradyrhizobium sp. (strain BTAi1 / ATCC BAA-1182).